The primary structure comprises 503 residues: AMP phosphorylase (503 aa).

AMP is bound by residues Gly168, 194–199 (SRAITS), and Thr203. Asp256 serves as the catalytic Proton donor. AMP is bound by residues Ser264 and Lys288.

This sequence belongs to the thymidine/pyrimidine-nucleoside phosphorylase family. Type 2 subfamily.

The enzyme catalyses AMP + phosphate = alpha-D-ribose 1,5-bisphosphate + adenine. It carries out the reaction CMP + phosphate = cytosine + alpha-D-ribose 1,5-bisphosphate. It catalyses the reaction UMP + phosphate = alpha-D-ribose 1,5-bisphosphate + uracil. In terms of biological role, catalyzes the conversion of AMP and phosphate to adenine and ribose 1,5-bisphosphate (R15P). Exhibits phosphorylase activity toward CMP and UMP in addition to AMP. Functions in an archaeal AMP degradation pathway, together with R15P isomerase and RubisCO. The chain is AMP phosphorylase from Pyrococcus furiosus (strain ATCC 43587 / DSM 3638 / JCM 8422 / Vc1).